Consider the following 201-residue polypeptide: Recombination protein RecR (201 aa).

The C4-type zinc-finger motif lies at 57–72 (CADCRTFTEQDVCNIC). The region spanning 81–176 (GQICVVESPA…SASRIAHGVP (96 aa)) is the Toprim domain.

This sequence belongs to the RecR family.

In terms of biological role, may play a role in DNA repair. It seems to be involved in an RecBC-independent recombinational process of DNA repair. It may act with RecF and RecO. This Enterobacter sp. (strain 638) protein is Recombination protein RecR.